The primary structure comprises 670 residues: Leucine-rich repeat-containing protein 45 (670 aa).

5 LRR repeats span residues 87 to 108, 115 to 136, 145 to 166, 173 to 194, and 201 to 223; these read TVKSLDLKGNNLRTTGAEALGK, SIRSLILEWNSLGVWEEGFSFF, FLQRLDLRNNQINHHGAGELAM, SLQELDLRWNNIGLLGGRALLN, and TLKKLELAGNNVPSDILKAVEQA. Positions 234-645 form a coiled coil; sequence LSETQNRTSV…ISRMKEEEAQ (412 aa).

Homomer.

Its subcellular location is the cytoplasm. The protein localises to the cytoskeleton. It localises to the microtubule organizing center. It is found in the centrosome. Component of the proteinaceous fiber-like linker between two centrioles, required for centrosome cohesion. In Gallus gallus (Chicken), this protein is Leucine-rich repeat-containing protein 45 (LRRC45).